Consider the following 105-residue polypeptide: Thiosulfate sulfurtransferase GlpE (105 aa).

Residues 16–104 enclose the Rhodanese domain; sequence DKEDVVIADI…WEAAYSEKVE (89 aa). C64 (cysteine persulfide intermediate) is an active-site residue.

This sequence belongs to the GlpE family.

The protein resides in the cytoplasm. The catalysed reaction is thiosulfate + hydrogen cyanide = thiocyanate + sulfite + 2 H(+). It catalyses the reaction thiosulfate + [thioredoxin]-dithiol = [thioredoxin]-disulfide + hydrogen sulfide + sulfite + 2 H(+). Functionally, transferase that catalyzes the transfer of sulfur from thiosulfate to thiophilic acceptors such as cyanide or dithiols. May function in a CysM-independent thiosulfate assimilation pathway by catalyzing the conversion of thiosulfate to sulfite, which can then be used for L-cysteine biosynthesis. This Pseudoalteromonas translucida (strain TAC 125) protein is Thiosulfate sulfurtransferase GlpE.